A 360-amino-acid chain; its full sequence is tRNA-specific 2-thiouridylase MnmA (360 aa).

ATP is bound by residues 8–15 and methionine 34; that span reads GMSGGVDS. Residues 94–96 are interaction with target base in tRNA; the sequence is NPD. The active-site Nucleophile is cysteine 99. Cysteine 99 and cysteine 195 form a disulfide bridge. Glycine 123 serves as a coordination point for ATP. Positions 145-147 are interaction with tRNA; that stretch reads KDQ. Cysteine 195 serves as the catalytic Cysteine persulfide intermediate. The segment at 307-308 is interaction with tRNA; it reads RY.

This sequence belongs to the MnmA/TRMU family.

The protein localises to the cytoplasm. It carries out the reaction S-sulfanyl-L-cysteinyl-[protein] + uridine(34) in tRNA + AH2 + ATP = 2-thiouridine(34) in tRNA + L-cysteinyl-[protein] + A + AMP + diphosphate + H(+). Catalyzes the 2-thiolation of uridine at the wobble position (U34) of tRNA, leading to the formation of s(2)U34. This Methylobacillus flagellatus (strain ATCC 51484 / DSM 6875 / VKM B-1610 / KT) protein is tRNA-specific 2-thiouridylase MnmA.